Consider the following 351-residue polypeptide: Nicotinate-nucleotide--dimethylbenzimidazole phosphoribosyltransferase (351 aa).

Catalysis depends on E317, which acts as the Proton acceptor.

Belongs to the CobT family.

The catalysed reaction is 5,6-dimethylbenzimidazole + nicotinate beta-D-ribonucleotide = alpha-ribazole 5'-phosphate + nicotinate + H(+). It participates in nucleoside biosynthesis; alpha-ribazole biosynthesis; alpha-ribazole from 5,6-dimethylbenzimidazole: step 1/2. Its function is as follows. Catalyzes the synthesis of alpha-ribazole-5'-phosphate from nicotinate mononucleotide (NAMN) and 5,6-dimethylbenzimidazole (DMB). This Bradyrhizobium sp. (strain BTAi1 / ATCC BAA-1182) protein is Nicotinate-nucleotide--dimethylbenzimidazole phosphoribosyltransferase.